Reading from the N-terminus, the 470-residue chain is MSQNFGKISQVIGAVIDVEFEPGKLPPIYQALRVTNPAIDDQEFNLVLEVAQHLGENAVRTIAMDSTDGLVRGQQVKDMGKQISVPVGKKTLGRILNVIGEPVDEMGPIGNEKEYGIHREAPAFVNQSTKVEAFTTGIKVVDLLAPYARGGKIGLFGGAGVGKTVLIMELINNIAKQHGGFSVFAGVGERTREGNDLWMEMKESGVLDKAALVYGQMNEPPGARARVALSALSIAEYFRDEEGQDVLLFVDNIFRFTQAGSEVSALLGRIPSAVGYQPTLATEMGELQERITSTNKGSITSVQAIYVPADDLTDPAPATAFAHLDATTVLSRQIAELGIYPAVDPLDSTSRILDPQVIGDEHYAIARQVQYVLQKYKDLQDIIAILGMDELSEEDKLVVARARKIQKFLSQPFHVAEAFTGSPGKYVELKDTIKGFSEIIAGKHDDLPEQAFYMVGTIEEAIEKAQKLAV.

157 to 164 (GGAGVGKT) provides a ligand contact to ATP.

The protein belongs to the ATPase alpha/beta chains family. As to quaternary structure, F-type ATPases have 2 components, CF(1) - the catalytic core - and CF(0) - the membrane proton channel. CF(1) has five subunits: alpha(3), beta(3), gamma(1), delta(1), epsilon(1). CF(0) has three main subunits: a(1), b(2) and c(9-12). The alpha and beta chains form an alternating ring which encloses part of the gamma chain. CF(1) is attached to CF(0) by a central stalk formed by the gamma and epsilon chains, while a peripheral stalk is formed by the delta and b chains.

The protein resides in the cell inner membrane. It catalyses the reaction ATP + H2O + 4 H(+)(in) = ADP + phosphate + 5 H(+)(out). Functionally, produces ATP from ADP in the presence of a proton gradient across the membrane. The catalytic sites are hosted primarily by the beta subunits. This Geobacter sp. (strain M21) protein is ATP synthase subunit beta.